We begin with the raw amino-acid sequence, 163 residues long: Urease accessory protein UreE (163 aa).

Residues 144 to 163 (QPEPGAYGGSSAGSHDGHHH) are disordered.

It belongs to the UreE family.

Its subcellular location is the cytoplasm. Functionally, involved in urease metallocenter assembly. Binds nickel. Probably functions as a nickel donor during metallocenter assembly. The sequence is that of Urease accessory protein UreE from Aliivibrio fischeri (strain ATCC 700601 / ES114) (Vibrio fischeri).